The following is a 252-amino-acid chain: MGRILKAILGQLSFFTIIPSPSASLEEIAEFSFISPLMVGIITGIIDWFVVLLGIRLIGSLGALLLIPTVEIIRGFHHLDGLLDMGDALMVGKERRPQVLHDLQTGSGAIGLFLVYFSIFLIATLNLNVSNLWFFLPSEVLARASAISLLGLMKPIPGSYLGKVFHDKMRDKLFSIKFLLVQVFAILFSSPVLILAYVILLLVFYLMAKLVFDGMSGDIVGAIITLSFPIYLLVAEKTCYHYFIFQYSLTLP.

5 helical membrane passes run 33 to 53, 105 to 125, 132 to 152, 184 to 204, and 215 to 235; these read FISP…VVLL, TGSG…IATL, LWFF…LLGL, FAIL…LLVF, and MSGD…LLVA.

Belongs to the CobS family. It depends on Mg(2+) as a cofactor.

The protein localises to the cell membrane. The catalysed reaction is alpha-ribazole + adenosylcob(III)inamide-GDP = adenosylcob(III)alamin + GMP + H(+). It carries out the reaction alpha-ribazole 5'-phosphate + adenosylcob(III)inamide-GDP = adenosylcob(III)alamin 5'-phosphate + GMP + H(+). The protein operates within cofactor biosynthesis; adenosylcobalamin biosynthesis; adenosylcobalamin from cob(II)yrinate a,c-diamide: step 7/7. Functionally, joins adenosylcobinamide-GDP and alpha-ribazole to generate adenosylcobalamin (Ado-cobalamin). Also synthesizes adenosylcobalamin 5'-phosphate from adenosylcobinamide-GDP and alpha-ribazole 5'-phosphate. The protein is Adenosylcobinamide-GDP ribazoletransferase of Sulfolobus acidocaldarius (strain ATCC 33909 / DSM 639 / JCM 8929 / NBRC 15157 / NCIMB 11770).